We begin with the raw amino-acid sequence, 48 residues long: Disintegrin leucogastin-A (48 aa).

In terms of domain architecture, Disintegrin spans 1 to 47; sequence DCASGPCCRDCKFLEEFTICNMARGDDMNDYCNGKTCDCPRNPHKWP. 4 disulfides stabilise this stretch: Cys2-Cys11, Cys7-Cys32, Cys8-Cys37, and Cys20-Cys39. The Cell attachment site signature appears at 24–26; sequence RGD.

The protein belongs to the venom metalloproteinase (M12B) family. P-II subfamily. P-IIa sub-subfamily. As to quaternary structure, monomer (disintegrin). As to expression, expressed by the venom gland.

The protein resides in the secreted. Functionally, inhibits ADP-induced human platelet aggregation. In Echis leucogaster (Roman's saw-scaled viper), this protein is Disintegrin leucogastin-A.